The primary structure comprises 180 residues: Fetal and adult testis-expressed transcript protein homolog (180 aa).

The segment at 77–108 is disordered; the sequence is GPQLRGVGVVGEQGDGGAQPQENPGGSQGMRS. Gly residues predominate over residues 84–93; sequence GVVGEQGDGG. Polar residues predominate over residues 96–107; the sequence is PQENPGGSQGMR. A helical transmembrane segment spans residues 160 to 178; sequence VLLFTMLLSSCITNLWLWM.

Interacts with BIK and RNF183. Interacts with IMMT/MIC60and EMD.

The protein localises to the mitochondrion. It is found in the mitochondrion outer membrane. It localises to the endoplasmic reticulum membrane. Involved in the regulation of endoplasmic reticulum (ER)-mitochondria coupling. Negatively regulates the ER-mitochondria distance and Ca(2+) transfer from ER to mitochondria possibly implicating it in the regulation of apoptosis. May collaborate with RNF183 to restrain BIK protein levels thus regulating apoptotic signaling. The chain is Fetal and adult testis-expressed transcript protein homolog (FATE1) from Bos taurus (Bovine).